The sequence spans 456 residues: Riboflavin transporter RibZ (456 aa).

The next 14 membrane-spanning stretches (helical) occupy residues W5–L25, W45–G65, F78–I98, A105–A125, I134–L154, G158–I178, S192–M212, L220–F240, I260–L280, M289–A309, I321–A341, S343–S363, F385–F405, and Q428–M448.

Belongs to the major facilitator superfamily.

The protein localises to the cell membrane. In terms of biological role, transports riboflavin into the cell. The polypeptide is Riboflavin transporter RibZ (Clostridioides difficile (strain 630) (Peptoclostridium difficile)).